Reading from the N-terminus, the 56-residue chain is Small ribosomal subunit protein bS21 (56 aa).

This sequence belongs to the bacterial ribosomal protein bS21 family.

The chain is Small ribosomal subunit protein bS21 from Synechococcus sp. (strain RCC307).